We begin with the raw amino-acid sequence, 982 residues long: Dual specificity protein kinase Ttk (982 aa).

Disordered regions lie at residues 178–204 (LSHE…DGTC), 211–230 (TFLH…PVWR), and 493–574 (AEHQ…PLRL). Polar residues predominate over residues 211-223 (TFLHSDQKFSPQE). Positions 510 to 533 (MKREENPVKAPEDHQKPFSKETSS) are enriched in basic and acidic residues. The 264-residue stretch at 653–916 (FFIFKMIGRG…IAELLDHPYL (264 aa)) folds into the Protein kinase domain. Residues 659–667 (IGRGGSSKV) and Lys681 each bind ATP. The Proton acceptor role is filled by Asp775.

This sequence belongs to the protein kinase superfamily. Ser/Thr protein kinase family. It depends on Mg(2+) as a cofactor. As to expression, barely detectable in adult somatic tissues. Expressed in immature germ cells that have not completed meiosis. In ovary, expressed predominantly in previtellogenic oocytes. In testis, expressed in primary and secondary spermatocytes, but not mature spermatozoa.

It carries out the reaction L-seryl-[protein] + ATP = O-phospho-L-seryl-[protein] + ADP + H(+). The catalysed reaction is L-threonyl-[protein] + ATP = O-phospho-L-threonyl-[protein] + ADP + H(+). The enzyme catalyses L-tyrosyl-[protein] + ATP = O-phospho-L-tyrosyl-[protein] + ADP + H(+). Involved in mitotic spindle assembly checkpoint signaling, a process that delays anaphase until chromosomes are bioriented on the spindle, and in the repair of incorrect mitotic kinetochore-spindle microtubule attachments. Required to prevent chromosome segregation errors during meiosis. Required for fin and heart regeneration. The chain is Dual specificity protein kinase Ttk (ttk) from Danio rerio (Zebrafish).